Here is a 653-residue protein sequence, read N- to C-terminus: Putative clathrin assembly protein At2g25430 (653 aa).

The ENTH domain occupies 23–159 (VASNMAPDLE…ELALFERKSG (137 aa)). Residues 160–171 (VSVNSGGNSSHH) are compositionally biased toward low complexity. The interval 160 to 240 (VSVNSGGNSS…GGGGGGRDEK (81 aa)) is disordered. Basic and acidic residues predominate over residues 172 to 186 (SNNDDRYGRGRDDFR). The span at 197–214 (NGGGGGSDFRGDNNGYGG) shows a compositional bias: gly residues. Residue Ser221 is modified to Phosphoserine. Residue Thr244 is modified to Phosphothreonine. The span at 376-389 (RAKRGKSPERKEIE) shows a compositional bias: basic and acidic residues. Positions 376–431 (RAKRGKSPERKEIEAPPPVVEEEEPEPDMNEIKALPPPENYTPPPPPEPEPQPEKP) are disordered. A compositionally biased stretch (acidic residues) spans 395-404 (VEEEEPEPDM). Positions 410–425 (LPPPENYTPPPPPEPE) are enriched in pro residues.

Its subcellular location is the membrane. It localises to the clathrin-coated pit. The protein localises to the golgi apparatus. It is found in the cytoplasmic vesicle. The protein resides in the clathrin-coated vesicle. The protein is Putative clathrin assembly protein At2g25430 of Arabidopsis thaliana (Mouse-ear cress).